The following is a 405-amino-acid chain: Octaketide synthase 3 (405 aa).

Residues 1–10 show a composition bias toward polar residues; that stretch reads MGSIAESSPL. Positions 1–22 are disordered; it reads MGSIAESSPLMSRENVEGIRKA. Cys-176 is an active-site residue. Residues Ser-283 and 320–323 each bind CoA; that span reads GGRA.

It belongs to the thiolase-like superfamily. Chalcone/stilbene synthases family. In terms of assembly, homodimer.

Its pathway is secondary metabolite biosynthesis; flavonoid biosynthesis. In terms of biological role, catalyzes the iterative condensations of 8 molecules of malonyl-CoA to produce aromatic octaketides, SEK4 and SEK4b, the products of the minimal polyketide synthase for the benzoisochromanequinone actinorhodin. May be involved in the biosynthesis of the octaketide barbaloin. In Aloe arborescens (Kidachi aloe), this protein is Octaketide synthase 3 (PKS5).